We begin with the raw amino-acid sequence, 190 residues long: Jupiter microtubule associated homolog 2 (190 aa).

At Met1 the chain carries N-acetylmethionine. Positions 1–190 (MFQVPDSEGG…PGGKSSISFY (190 aa)) are disordered. Residue Ser30 is modified to Phosphoserine. Position 35 is a phosphothreonine (Thr35). A compositionally biased stretch (polar residues) spans 35 to 44 (TPSSRPNRMA). Phosphoserine is present on residues Ser45, Ser69, and Ser97. Positions 110-129 (KPKDHVFLCEGEEPKSDLKA) are enriched in basic and acidic residues. Phosphoserine is present on residues Ser132 and Ser144. Residues 139–167 (PGEKGSARKAGPAKEQEPMPTVDSHEPRL) are compositionally biased toward basic and acidic residues.

Belongs to the JUPITER family. As to quaternary structure, monomer. Dimer. Interacts with TPCN1. As to expression, expressed in liver, kidney, prostate, testis and uterus.

It is found in the cytoplasm. The protein resides in the nucleus. In terms of biological role, nicotinic acid adenine dinucleotide phosphate (NAADP) binding protein required for NAADP-evoked intracellular calcium release. Confers NAADP-sensitivity to the two pore channels (TPCs) complex. Enables NAADP to activate Ca(2+) release from the endoplasmic reticulum through ryanodine receptors. Functionally, (Microbial infection) Involved in the endolysosomal trafficking of human coronavirus SARS-CoV-2. The protein is Jupiter microtubule associated homolog 2 of Homo sapiens (Human).